A 200-amino-acid chain; its full sequence is uncharacterized protein (200 aa).

A signal peptide spans 1–24 (MSRVFSCVLRACVCAGLCCWVCMG). The interval 124–200 (GGRDLPMHGA…GEGGDNGEGE (77 aa)) is disordered. Over residues 184–200 (LGDEGETGEGGDNGEGE) the composition is skewed to acidic residues.

This is an uncharacterized protein from Homo sapiens (Human).